Reading from the N-terminus, the 477-residue chain is Phosphomethylpyrimidine synthase (477 aa).

Substrate is bound by residues N67, M96, Y125, H160, 180 to 182 (SRG), 221 to 224 (DGLR), and E260. Residue H264 coordinates Zn(2+). A substrate-binding site is contributed by Y287. H328 contacts Zn(2+). Residues C408, C411, and C416 each contribute to the [4Fe-4S] cluster site. Residues 427–440 (AGDGMDGLESRTDL) show a composition bias toward basic and acidic residues. Residues 427-477 (AGDGMDGLESRTDLDSSAAAAVNRPPTGVHRAEKLDDIPCPVAEDDVAADD) form a disordered region.

The protein belongs to the ThiC family. The cofactor is [4Fe-4S] cluster.

The catalysed reaction is 5-amino-1-(5-phospho-beta-D-ribosyl)imidazole + S-adenosyl-L-methionine = 4-amino-2-methyl-5-(phosphooxymethyl)pyrimidine + CO + 5'-deoxyadenosine + formate + L-methionine + 3 H(+). The protein operates within cofactor biosynthesis; thiamine diphosphate biosynthesis. Functionally, catalyzes the synthesis of the hydroxymethylpyrimidine phosphate (HMP-P) moiety of thiamine from aminoimidazole ribotide (AIR) in a radical S-adenosyl-L-methionine (SAM)-dependent reaction. The protein is Phosphomethylpyrimidine synthase of Natronomonas pharaonis (strain ATCC 35678 / DSM 2160 / CIP 103997 / JCM 8858 / NBRC 14720 / NCIMB 2260 / Gabara) (Halobacterium pharaonis).